The primary structure comprises 121 residues: Replication protein A 14 kDa subunit (121 aa).

Residues Lys39 and Lys88 each participate in a glycyl lysine isopeptide (Lys-Gly) (interchain with G-Cter in ubiquitin) cross-link.

The protein belongs to the replication factor A protein 3 family. Component of the canonical replication protein A complex (RPA), a heterotrimer composed of RPA1, RPA2 and RPA3. Also a component of the aRPA, the alternative replication protein A complex, a trimeric complex similar to the replication protein A complex/RPA but where RPA1 and RPA3 are associated with RPA4 instead of RPA2. In terms of processing, ubiquitinated by RFWD3 at stalled replication forks in response to DNA damage: ubiquitination by RFWD3 does not lead to degradation by the proteasome and promotes removal of the RPA complex from stalled replication forks, promoting homologous recombination.

It is found in the nucleus. As part of the heterotrimeric replication protein A complex (RPA/RP-A), binds and stabilizes single-stranded DNA intermediates, that form during DNA replication or upon DNA stress. It prevents their reannealing and in parallel, recruits and activates different proteins and complexes involved in DNA metabolism. Thereby, it plays an essential role both in DNA replication and the cellular response to DNA damage. In the cellular response to DNA damage, the RPA complex controls DNA repair and DNA damage checkpoint activation. Through recruitment of ATRIP activates the ATR kinase a master regulator of the DNA damage response. It is required for the recruitment of the DNA double-strand break repair factors RAD51 and RAD52 to chromatin, in response to DNA damage. Also recruits to sites of DNA damage proteins like XPA and XPG that are involved in nucleotide excision repair and is required for this mechanism of DNA repair. Also plays a role in base excision repair (BER), probably through interaction with UNG. Also recruits SMARCAL1/HARP, which is involved in replication fork restart, to sites of DNA damage. May also play a role in telomere maintenance. RPA3 has its own single-stranded DNA-binding activity and may be responsible for polarity of the binding of the complex to DNA. The chain is Replication protein A 14 kDa subunit (Rpa3) from Mus musculus (Mouse).